We begin with the raw amino-acid sequence, 335 residues long: ATP-dependent 6-phosphofructokinase (335 aa).

ATP is bound at residue G11. ADP is bound at residue 21–25 (RAVVR). ATP is bound by residues 72-73 (RY) and 102-105 (GDGS). Residue D103 coordinates Mg(2+). 125 to 127 (TID) is a binding site for substrate. D127 (proton acceptor) is an active-site residue. R154 is an ADP binding site. Substrate contacts are provided by residues R162 and 169–171 (MGR). ADP-binding positions include 185–187 (GAD) and 213–215 (KKH). Substrate contacts are provided by residues E222, R244, and 250-253 (HIQR).

It belongs to the phosphofructokinase type A (PFKA) family. ATP-dependent PFK group I subfamily. Prokaryotic clade 'B1' sub-subfamily. Homotetramer. Mg(2+) serves as cofactor.

It localises to the cytoplasm. The enzyme catalyses beta-D-fructose 6-phosphate + ATP = beta-D-fructose 1,6-bisphosphate + ADP + H(+). It functions in the pathway carbohydrate degradation; glycolysis; D-glyceraldehyde 3-phosphate and glycerone phosphate from D-glucose: step 3/4. Allosterically activated by ADP and other diphosphonucleosides, and allosterically inhibited by phosphoenolpyruvate. In terms of biological role, catalyzes the phosphorylation of D-fructose 6-phosphate to fructose 1,6-bisphosphate by ATP, the first committing step of glycolysis. In Streptococcus pneumoniae serotype 4 (strain ATCC BAA-334 / TIGR4), this protein is ATP-dependent 6-phosphofructokinase.